The following is a 557-amino-acid chain: CTP synthase (557 aa).

The interval 1-270 (MTKYVFVTGG…DAIICEELKL (270 aa)) is amidoligase domain. Residue S13 coordinates CTP. S13 contributes to the UTP binding site. ATP contacts are provided by residues 14–19 (SLGKGI) and D71. Residues D71 and E144 each contribute to the Mg(2+) site. CTP contacts are provided by residues 151 to 153 (DIE), 191 to 196 (KTKPTQ), and K227. UTP-binding positions include 191 to 196 (KTKPTQ) and K227. The region spanning 295 to 547 (TIGMVGKYVD…VEAALAHQQS (253 aa)) is the Glutamine amidotransferase type-1 domain. G356 serves as a coordination point for L-glutamine. The active-site Nucleophile; for glutamine hydrolysis is the C383. L-glutamine is bound by residues 384–387 (LGMQ), E407, and R473. Residues H520 and E522 contribute to the active site.

It belongs to the CTP synthase family. Homotetramer.

The catalysed reaction is UTP + L-glutamine + ATP + H2O = CTP + L-glutamate + ADP + phosphate + 2 H(+). It catalyses the reaction L-glutamine + H2O = L-glutamate + NH4(+). It carries out the reaction UTP + NH4(+) + ATP = CTP + ADP + phosphate + 2 H(+). The protein operates within pyrimidine metabolism; CTP biosynthesis via de novo pathway; CTP from UDP: step 2/2. Allosterically activated by GTP, when glutamine is the substrate; GTP has no effect on the reaction when ammonia is the substrate. The allosteric effector GTP functions by stabilizing the protein conformation that binds the tetrahedral intermediate(s) formed during glutamine hydrolysis. Inhibited by the product CTP, via allosteric rather than competitive inhibition. Functionally, catalyzes the ATP-dependent amination of UTP to CTP with either L-glutamine or ammonia as the source of nitrogen. Regulates intracellular CTP levels through interactions with the four ribonucleotide triphosphates. This is CTP synthase from Paraburkholderia xenovorans (strain LB400).